A 21-amino-acid polypeptide reads, in one-letter code: Peptide PGLa-R3 (21 aa).

Leucine amide is present on Leu21.

As to expression, expressed by the skin glands.

The protein resides in the secreted. In terms of biological role, antimicrobial peptide. This Xenopus ruwenzoriensis (Uganda clawed frog) protein is Peptide PGLa-R3.